Consider the following 102-residue polypeptide: Co-chaperonin GroES (102 aa).

The protein belongs to the GroES chaperonin family. Heptamer of 7 subunits arranged in a ring. Interacts with the chaperonin GroEL.

It is found in the cytoplasm. Its function is as follows. Together with the chaperonin GroEL, plays an essential role in assisting protein folding. The GroEL-GroES system forms a nano-cage that allows encapsulation of the non-native substrate proteins and provides a physical environment optimized to promote and accelerate protein folding. GroES binds to the apical surface of the GroEL ring, thereby capping the opening of the GroEL channel. The protein is Co-chaperonin GroES of Chlamydia trachomatis serovar L2 (strain ATCC VR-902B / DSM 19102 / 434/Bu).